We begin with the raw amino-acid sequence, 329 residues long: Flotillin-like protein FloA (329 aa).

The next 2 membrane-spanning stretches (helical) occupy residues 6–26 and 27–47; these read FIVI…FVPI and GLWI…LVGM.

It belongs to the flotillin-like FloA family. Homooligomerizes.

The protein localises to the cell membrane. It localises to the membrane raft. Its function is as follows. Found in functional membrane microdomains (FMM) that may be equivalent to eukaryotic membrane rafts. FMMs are highly dynamic and increase in number as cells age. Flotillins are thought to be important factors in membrane fluidity. This Staphylococcus aureus (strain USA300) protein is Flotillin-like protein FloA.